Consider the following 409-residue polypeptide: LL-diaminopimelate aminotransferase (409 aa).

Substrate contacts are provided by Tyr15 and Gly42. Residues Tyr72, 108–109, Tyr132, Asn187, Tyr218, and 246–248 contribute to the pyridoxal 5'-phosphate site; these read SK and SFS. Substrate contacts are provided by Lys109, Tyr132, and Asn187. N6-(pyridoxal phosphate)lysine is present on Lys249. 2 residues coordinate pyridoxal 5'-phosphate: Arg257 and Asn292. Substrate is bound by residues Asn292 and Arg388.

The protein belongs to the class-I pyridoxal-phosphate-dependent aminotransferase family. LL-diaminopimelate aminotransferase subfamily. As to quaternary structure, homodimer. Pyridoxal 5'-phosphate is required as a cofactor.

It carries out the reaction (2S,6S)-2,6-diaminopimelate + 2-oxoglutarate = (S)-2,3,4,5-tetrahydrodipicolinate + L-glutamate + H2O + H(+). The protein operates within amino-acid biosynthesis; L-lysine biosynthesis via DAP pathway; LL-2,6-diaminopimelate from (S)-tetrahydrodipicolinate (aminotransferase route): step 1/1. Its function is as follows. Involved in the synthesis of meso-diaminopimelate (m-DAP or DL-DAP), required for both lysine and peptidoglycan biosynthesis. Catalyzes the direct conversion of tetrahydrodipicolinate to LL-diaminopimelate. This Heliobacterium modesticaldum (strain ATCC 51547 / Ice1) protein is LL-diaminopimelate aminotransferase.